Here is a 259-residue protein sequence, read N- to C-terminus: Pyrroloquinoline-quinone synthase (259 aa).

This sequence belongs to the PqqC family.

The enzyme catalyses 6-(2-amino-2-carboxyethyl)-7,8-dioxo-1,2,3,4,7,8-hexahydroquinoline-2,4-dicarboxylate + 3 O2 = pyrroloquinoline quinone + 2 H2O2 + 2 H2O + H(+). It functions in the pathway cofactor biosynthesis; pyrroloquinoline quinone biosynthesis. Its function is as follows. Ring cyclization and eight-electron oxidation of 3a-(2-amino-2-carboxyethyl)-4,5-dioxo-4,5,6,7,8,9-hexahydroquinoline-7,9-dicarboxylic-acid to PQQ. This Bradyrhizobium diazoefficiens (strain JCM 10833 / BCRC 13528 / IAM 13628 / NBRC 14792 / USDA 110) protein is Pyrroloquinoline-quinone synthase.